The primary structure comprises 827 residues: Periplasmic nitrate reductase (827 aa).

The tat-type signal signal peptide spans 1 to 32; that stretch reads MNLSRRDFMKANAALAAASVAGLIIPVKNVNA. Residues 37–93 enclose the 4Fe-4S Mo/W bis-MGD-type domain; the sequence is ITWDKAVCRFCGTGCAVLVGTKDGRVVASQGDPDAEVNRGLNCIKGYFLPKIMYGKD. [4Fe-4S] cluster-binding residues include cysteine 44, cysteine 47, cysteine 51, and cysteine 79. Mo-bis(molybdopterin guanine dinucleotide) contacts are provided by residues lysine 81, glutamine 148, asparagine 173, cysteine 177, 210-217, 242-246, 261-263, methionine 372, glutamine 376, asparagine 482, 508-509, lysine 531, aspartate 558, and 717-726; these read WGSNMAEM, STFEH, QSD, SD, and TGRILEHWHT. Phenylalanine 793 contacts substrate. The Mo-bis(molybdopterin guanine dinucleotide) site is built by asparagine 801 and lysine 818.

This sequence belongs to the prokaryotic molybdopterin-containing oxidoreductase family. NasA/NapA/NarB subfamily. As to quaternary structure, component of the periplasmic nitrate reductase NapAB complex composed of NapA and NapB. The cofactor is [4Fe-4S] cluster. It depends on Mo-bis(molybdopterin guanine dinucleotide) as a cofactor. Post-translationally, predicted to be exported by the Tat system. The position of the signal peptide cleavage has not been experimentally proven.

Its subcellular location is the periplasm. The catalysed reaction is 2 Fe(II)-[cytochrome] + nitrate + 2 H(+) = 2 Fe(III)-[cytochrome] + nitrite + H2O. Catalytic subunit of the periplasmic nitrate reductase complex NapAB. Receives electrons from NapB and catalyzes the reduction of nitrate to nitrite. This Histophilus somni (strain 2336) (Haemophilus somnus) protein is Periplasmic nitrate reductase.